Consider the following 417-residue polypeptide: Serpin A9 (417 aa).

A signal peptide spans 1–23; it reads MASYLYGVLFAVGLCAPIYCVSP. N-linked (GlcNAc...) asparagine glycans are attached at residues N101 and N390.

It belongs to the serpin family. In terms of tissue distribution, highly expressed in normal germinal center (GC) B-cells and GC B-cell-derived malignancies.

It localises to the secreted. It is found in the cytoplasm. The protein resides in the membrane. In terms of biological role, protease inhibitor that inhibits trypsin and trypsin-like serine proteases (in vitro). Inhibits plasmin and thrombin with lower efficiency (in vitro). The chain is Serpin A9 (SERPINA9) from Homo sapiens (Human).